The following is a 712-amino-acid chain: Glycine--tRNA ligase beta subunit (712 aa).

Belongs to the class-II aminoacyl-tRNA synthetase family. Tetramer of two alpha and two beta subunits.

Its subcellular location is the cytoplasm. The enzyme catalyses tRNA(Gly) + glycine + ATP = glycyl-tRNA(Gly) + AMP + diphosphate. This Acaryochloris marina (strain MBIC 11017) protein is Glycine--tRNA ligase beta subunit.